A 397-amino-acid polypeptide reads, in one-letter code: Subtilisin-like serine protease Pen ch 13.0101 (397 aa).

Positions 1 to 19 are cleaved as a signal peptide; it reads MGFLKVLATSLATLAVVDA. The propeptide at 20 to 115 is removed in mature form; that stretch reads GTLLTASNTD…IEPDMIVNAT (96 aa). Residues 35 to 113 form the Inhibitor I9 domain; sequence SYIVVMNDDV…KYIEPDMIVN (79 aa). Residue Asn113 is glycosylated (N-linked (GlcNAc...) asparagine). In terms of domain architecture, Peptidase S8 spans 125–397; that stretch reads SWGLARISSK…SKLLYNGINV (273 aa). Residues Asp157 and His188 each act as charge relay system in the active site. Asn249 and Asn284 each carry an N-linked (GlcNAc...) asparagine glycan. Ser343 (charge relay system) is an active-site residue.

The protein belongs to the peptidase S8 family.

The protein resides in the secreted. In terms of biological role, serine protease. In Penicillium rubens, this protein is Subtilisin-like serine protease Pen ch 13.0101.